Consider the following 885-residue polypeptide: Translation initiation factor IF-2 (885 aa).

Disordered stretches follow at residues K135–E159 and Q184–M289. Over residues Q184–I232 the composition is skewed to basic and acidic residues. Basic residues predominate over residues G253 to R266. Basic and acidic residues predominate over residues G267–E276. The 170-residue stretch at P385–K554 folds into the tr-type G domain. Positions G394–T401 are G1. G394–T401 contacts GTP. Positions G419–H423 are G2. The segment at D440–G443 is G3. GTP-binding positions include D440–H444 and N494–D497. The tract at residues N494–D497 is G4. The G5 stretch occupies residues S530 to K532.

Belongs to the TRAFAC class translation factor GTPase superfamily. Classic translation factor GTPase family. IF-2 subfamily.

It localises to the cytoplasm. Functionally, one of the essential components for the initiation of protein synthesis. Protects formylmethionyl-tRNA from spontaneous hydrolysis and promotes its binding to the 30S ribosomal subunits. Also involved in the hydrolysis of GTP during the formation of the 70S ribosomal complex. The chain is Translation initiation factor IF-2 from Shewanella sp. (strain MR-7).